The following is a 505-amino-acid chain: ATP synthase subunit alpha (505 aa).

170 to 177 is an ATP binding site; it reads GDRQTGKT.

Belongs to the ATPase alpha/beta chains family. In terms of assembly, F-type ATPases have 2 components, CF(1) - the catalytic core - and CF(0) - the membrane proton channel. CF(1) has five subunits: alpha(3), beta(3), gamma(1), delta(1), epsilon(1). CF(0) has four main subunits: a(1), b(1), b'(1) and c(9-12).

It is found in the cellular thylakoid membrane. The enzyme catalyses ATP + H2O + 4 H(+)(in) = ADP + phosphate + 5 H(+)(out). Produces ATP from ADP in the presence of a proton gradient across the membrane. The alpha chain is a regulatory subunit. This is ATP synthase subunit alpha from Synechococcus sp. (strain RCC307).